The primary structure comprises 627 residues: Dual specificity testis-specific protein kinase 1 (627 aa).

The interval 1–36 is disordered; it reads MAGERPPLRGPGPGEAPGEGPGGAGGGPGRGRPSSY. A compositionally biased stretch (gly residues) spans 11 to 30; it reads PGPGEAPGEGPGGAGGGPGR. One can recognise a Protein kinase domain in the interval 52–309; sequence FDCAEKIGAG…TEITQHLEQI (258 aa). ATP is bound by residues 58 to 66 and Lys-81; that span reads IGAGFFSEV. The active-site Proton acceptor is the Asp-170. Residue Ser-215 is modified to Phosphoserine; by autocatalysis. Over residues 316-330 the composition is skewed to low complexity; the sequence is ATPLAKPPLTKAPLT. 4 disordered regions span residues 316 to 373, 436 to 485, 500 to 519, and 532 to 565; these read ATPL…SWGD, RCRS…GLAP, CSSA…NNNP, and REPW…EPEE. Arg-338 is modified (omega-N-methylarginine). Basic and acidic residues predominate over residues 348-357; the sequence is PDPRLSRSRS. The interval 421–525 is required for interaction with YWHAB; that stretch reads VTTPDILVQP…NNNPPAVVVN (105 aa). The interval 528–625 is required for interaction with PARVA; sequence QGWAREPWNR…PTPSLQLPGA (98 aa). Residues 528–627 are required for interaction with SPRED1 and SPRY2. Required for TESK1-mediated dephosphorylation of SPRY2 and SPRY2 inhibition of ERK phosphorylation; the sequence is QGWAREPWNR…PSLQLPGARS (100 aa).

The protein belongs to the protein kinase superfamily. TKL Ser/Thr protein kinase family. In terms of assembly, interacts (via both C- and N-termini) with SPRY4 (via C-terminus); the interaction inhibits TESK1 kinase activity. Interacts with TAOK1; the interaction inhibits TAOK1 kinase activity. Interacts (via C-terminus) with SPRED1 (via C-terminus); the interaction inhibits TESK1 kinase activity. Interacts (via C-terminus) with PARVA/PARVIN (via C-terminus); the interaction inhibits TESK1 kinase activity. Interacts with YWHAB/14-3-3 beta; the interaction is dependent on the phosphorylation of TESK1 Ser-439 and inhibits TESK1 kinase activity. Interacts with SPRY1, SPRY3 and SPRED2. Interacts (via C-terminus) with SPRY2 (via C-terminus); the interaction disrupts SPRY2 interaction with PPP2CA/PP2A-C, possibly by vesicular sequestration of SPRY2. Therefore dephosphorylation of SPRY2 by the serine/threonine-protein phosphatase 2A (PP2A) holoenzyme is lost, inhibiting its interaction with GRB2. Mg(2+) serves as cofactor. Requires Mn(2+) as cofactor. Post-translationally, autophosphorylated on serine and tyrosine residues. In terms of tissue distribution, expressed in testes and brain (at protein level).

The protein resides in the cytoplasm. The protein localises to the perinuclear region. It is found in the cytoskeleton. Its subcellular location is the microtubule organizing center. It localises to the centrosome. The protein resides in the cell projection. The protein localises to the lamellipodium. The catalysed reaction is L-seryl-[protein] + ATP = O-phospho-L-seryl-[protein] + ADP + H(+). It catalyses the reaction L-threonyl-[protein] + ATP = O-phospho-L-threonyl-[protein] + ADP + H(+). It carries out the reaction L-tyrosyl-[protein] + ATP = O-phospho-L-tyrosyl-[protein] + ADP + H(+). Its activity is regulated as follows. Activated by autophosphorylation on Ser-215. Kinase activity is inhibited by SPRED1. Its function is as follows. Dual specificity protein kinase activity catalyzing autophosphorylation and phosphorylation of exogenous substrates on both serine/threonine and tyrosine residues. Regulates the cellular cytoskeleton by enhancing actin stress fiber formation via phosphorylation of cofilin and by preventing microtubule breakdown via inhibition of TAOK1/MARKK kinase activity. Inhibits podocyte motility via regulation of actin cytoskeletal dynamics and phosphorylation of CFL1. Positively regulates integrin-mediated cell spreading, via phosphorylation of cofilin. Suppresses ciliogenesis via multiple pathways; phosphorylation of CFL1, suppression of ciliary vesicle directional trafficking to the ciliary base, and by facilitating YAP1 nuclear localization where it acts as a transcriptional corepressor of the TEAD4 target genes AURKA and PLK1. Probably plays a central role at and after the meiotic phase of spermatogenesis. This Mus musculus (Mouse) protein is Dual specificity testis-specific protein kinase 1 (Tesk1).